Here is a 177-residue protein sequence, read N- to C-terminus: Inorganic pyrophosphatase (177 aa).

Substrate is bound by residues lysine 30, arginine 44, and tyrosine 56. Aspartate 66, aspartate 71, and aspartate 103 together coordinate Mg(2+). Tyrosine 142 contacts substrate.

The protein belongs to the PPase family. Homohexamer. The cofactor is Mg(2+).

Its subcellular location is the cytoplasm. It catalyses the reaction diphosphate + H2O = 2 phosphate + H(+). Catalyzes the hydrolysis of inorganic pyrophosphate (PPi) forming two phosphate ions. The polypeptide is Inorganic pyrophosphatase (Agrobacterium fabrum (strain C58 / ATCC 33970) (Agrobacterium tumefaciens (strain C58))).